Here is a 602-residue protein sequence, read N- to C-terminus: Rho family-interacting cell polarization regulator 2 (602 aa).

The disordered stretch occupies residues 46-73 (KKPQAKVKKMHNLGHKNSTTPKEPQPKR). A compositionally biased stretch (basic residues) spans 48-59 (PQAKVKKMHNLG). Positions 83 to 112 (NGLDEYLEVHQTELDKLTAQLKDMRRNSRL) form a coiled coil. Positions 173 to 421 (RESLTEINRS…TTAATQHRAL (249 aa)) are necessary for interaction with NCAM and myoblast protrusion formation. The interval 384 to 474 (GDLPYEDRVP…RSEVCQKPSN (91 aa)) is disordered. Positions 403-416 (AHVSSSPDITTAAT) are enriched in polar residues. Over residues 423 to 437 (SSESSSPDCSSSDSC) the composition is skewed to low complexity.

Belongs to the RIPOR family. Homooligomer; homooligomerization is regulated by RHOC and leads to the formation of concatemers through the association of N- and C-termini. Interacts with NCAM.

The protein localises to the cytoplasm. It localises to the cytoskeleton. Its subcellular location is the cell projection. The protein resides in the filopodium. It is found in the apical cell membrane. The protein localises to the stereocilium. It localises to the stereocilium membrane. In terms of biological role, acts as an inhibitor of the small GTPase RHOA and plays several roles in the regulation of myoblast and hair cell differentiation, lymphocyte T proliferation and neutrophil polarization. Plays a role in fetal mononuclear myoblast differentiation by promoting filopodia and myotube formation. Maintains naive T lymphocytes in a quiescent state and prevents chemokine-induced T lymphocyte responses, such as cell adhesion, polarization and migration. Involved also in the regulation of neutrophil polarization, chemotaxis and adhesion. Required for normal development of inner and outer hair cell stereocilia within the cochlea of the inner ear. Plays a role for maintaining the structural organization of the basal domain of stereocilia. Involved in mechanosensory hair cell function. Required for normal hearing. The polypeptide is Rho family-interacting cell polarization regulator 2 (Gallus gallus (Chicken)).